Consider the following 2593-residue polypeptide: Citrinin polyketide synthase (2593 aa).

The interval 70-224 (KLLENLNAWI…YVSVIVDQRR (155 aa)) is N-terminal acylcarrier protein transacylase domain (SAT). Cys139 (nucleophile; for transacylase activity) is an active-site residue. The active-site Proton donor/acceptor; for transacylase activity is His258. The 416-residue stretch at 391–806 (DERIAVIGMA…GSNASMVVTQ (416 aa)) folds into the Ketosynthase family 3 (KS3) domain. Catalysis depends on for beta-ketoacyl synthase activity residues Cys555, His690, and His729. Residues 906 to 1191 (PDPKPVILCF…VAIWLEAGSN (286 aa)) form a malonyl-CoA:ACP transacylase (MAT) domain region. Residues 1291–1424 (PKGLTTFVGY…GTITFQAADS (134 aa)) form an N-terminal hotdog fold region. One can recognise a PKS/mFAS DH domain in the interval 1291-1603 (PKGLTTFVGY…YQKVSISGIR (313 aa)). The segment at 1322–1601 (LLSGHIMANA…ISYQKVSISG (280 aa)) is product template (PT) domain. His1326 (proton acceptor; for dehydratase activity) is an active-site residue. Residues 1451-1603 (VADDILQGRN…YQKVSISGIR (153 aa)) form a C-terminal hotdog fold region. Asp1508 functions as the Proton donor; for dehydratase activity in the catalytic mechanism. Residues 1636 to 1662 (VADSPLVDGSSTAVSGTPPTKKAPKAP) are disordered. The 78-residue stretch at 1661–1738 (APSVDITGKM…SLVECMQRIL (78 aa)) folds into the Carrier domain. Position 1689 is an O-(pantetheine 4'-phosphoryl)serine (Ser1689). Catalysis depends on for methyltransferase activity residues Tyr1955, His2067, and Glu2093. Residues 1960–2134 (INAVWIQQAE…ATHWKKILTS (175 aa)) form a methyltransferase (CMeT) domain region. The tract at residues 2215–2459 (PAPTGHCVLV…KALPDFDGSL (245 aa)) is NADPH-binding (R) domain.

The cofactor is pantetheine 4'-phosphate.

The protein operates within mycotoxin biosynthesis. Its function is as follows. Non-reducing polyketide synthase; part of the gene cluster that mediates the biosynthesis of the mycotoxin citrinin, a hepato-nephrotoxic compound to humans due to inhibition of respiration complex III. The pathway begins with the synthesis of a keto-aldehyde intermediate by the citrinin PKS (pksCT) from successive condensations of 4 malonyl-CoA units, presumably with a simple acetyl-CoA starter unit. Release of the keto-aldehyde intermediate is consistent with the presence of the C-terminal reductive release domain. Mp11 collaborates with pksCT by catalyzing the hydrolysis of ACP-bound acyl intermediates to free the ACP from stalled intermediates. Mpl2 then catalyzes the oxidation of the C-12 methyl of the ketone intermediate to an alcohol intermediate which is further oxidized by the oxidoreductase mpl7 to produce a bisaldehyde intermediate. The fourth catalytic step is catalyzed by the mpl4 aldehyde dehydrogenase. The final transformation is the reduction of C-3 by mpl6 to provide the chemically stable citrinin nucleus. This chain is Citrinin polyketide synthase, found in Monascus purpureus (Red mold).